Consider the following 475-residue polypeptide: Dihydrolipoyl dehydrogenase (475 aa).

Residues 37–46 (EQYYSLGGVC), Lys-55, and Ala-118 each bind FAD. Cysteines 46 and 51 form a disulfide. Residues 183–187 (GGGII), Asp-206, Val-239, and 272–275 (AIGR) each bind NAD(+). FAD-binding residues include Asp-315 and Ala-323. Residue His-447 is the Proton acceptor of the active site.

The protein belongs to the class-I pyridine nucleotide-disulfide oxidoreductase family. Homodimer. FAD serves as cofactor.

Its subcellular location is the cytoplasm. It catalyses the reaction N(6)-[(R)-dihydrolipoyl]-L-lysyl-[protein] + NAD(+) = N(6)-[(R)-lipoyl]-L-lysyl-[protein] + NADH + H(+). Its function is as follows. Lipoamide dehydrogenase is a component of the alpha-ketoacid dehydrogenase complexes. The chain is Dihydrolipoyl dehydrogenase (lpdA) from Buchnera aphidicola subsp. Baizongia pistaciae (strain Bp).